Reading from the N-terminus, the 146-residue chain is Acidic phospholipase A2 D (146 aa).

Residues 1 to 21 (MNPAHLLILAAVCVSPLGASS) form the signal peptide. The propeptide occupies 22–27 (NRPMPL). 7 disulfides stabilise this stretch: Cys38–Cys98, Cys53–Cys145, Cys55–Cys71, Cys70–Cys126, Cys77–Cys119, Cys87–Cys112, and Cys105–Cys117. The Ca(2+) site is built by Tyr54, Gly56, and Gly58. His74 is a catalytic residue. A Ca(2+)-binding site is contributed by Asp75. Residue Asp120 is part of the active site.

This sequence belongs to the phospholipase A2 family. Group I subfamily. D49 sub-subfamily. Requires Ca(2+) as cofactor. As to expression, expressed by the venom gland.

It localises to the secreted. It catalyses the reaction a 1,2-diacyl-sn-glycero-3-phosphocholine + H2O = a 1-acyl-sn-glycero-3-phosphocholine + a fatty acid + H(+). In terms of biological role, PLA2 catalyzes the calcium-dependent hydrolysis of the 2-acyl groups in 3-sn-phosphoglycerides. The protein is Acidic phospholipase A2 D of Naja sputatrix (Malayan spitting cobra).